We begin with the raw amino-acid sequence, 384 residues long: 8-amino-7-oxononanoate synthase (384 aa).

Residue Arg-21 coordinates substrate. 108–109 (GF) contacts pyridoxal 5'-phosphate. Residue His-133 coordinates substrate. The pyridoxal 5'-phosphate site is built by Ser-179, His-207, and Thr-233. Position 236 is an N6-(pyridoxal phosphate)lysine (Lys-236). Thr-352 is a binding site for substrate.

It belongs to the class-II pyridoxal-phosphate-dependent aminotransferase family. BioF subfamily. In terms of assembly, homodimer. Pyridoxal 5'-phosphate is required as a cofactor.

The catalysed reaction is 6-carboxyhexanoyl-[ACP] + L-alanine + H(+) = (8S)-8-amino-7-oxononanoate + holo-[ACP] + CO2. Its pathway is cofactor biosynthesis; biotin biosynthesis. Functionally, catalyzes the decarboxylative condensation of pimeloyl-[acyl-carrier protein] and L-alanine to produce 8-amino-7-oxononanoate (AON), [acyl-carrier protein], and carbon dioxide. In Shigella boydii serotype 18 (strain CDC 3083-94 / BS512), this protein is 8-amino-7-oxononanoate synthase.